The chain runs to 65 residues: Large ribosomal subunit protein bL33 (65 aa).

The interval 19–40 (TVPSSKKRSAGVSRYTTEKNRR) is disordered.

It belongs to the bacterial ribosomal protein bL33 family.

This is Large ribosomal subunit protein bL33 from Prochlorococcus marinus (strain NATL2A).